The sequence spans 590 residues: V-type ATP synthase alpha chain (590 aa).

232 to 239 (GPFGSGKT) serves as a coordination point for ATP.

It belongs to the ATPase alpha/beta chains family.

It carries out the reaction ATP + H2O + 4 H(+)(in) = ADP + phosphate + 5 H(+)(out). Functionally, produces ATP from ADP in the presence of a proton gradient across the membrane. The V-type alpha chain is a catalytic subunit. The polypeptide is V-type ATP synthase alpha chain (Thermoanaerobacter sp. (strain X514)).